A 203-amino-acid polypeptide reads, in one-letter code: Small ribosomal subunit protein uS4 (203 aa).

The region spanning 93–156 (RRLDNVVYRL…LKVPAILEAV (64 aa)) is the S4 RNA-binding domain.

Belongs to the universal ribosomal protein uS4 family. In terms of assembly, part of the 30S ribosomal subunit. Contacts protein S5. The interaction surface between S4 and S5 is involved in control of translational fidelity.

In terms of biological role, one of the primary rRNA binding proteins, it binds directly to 16S rRNA where it nucleates assembly of the body of the 30S subunit. Functionally, with S5 and S12 plays an important role in translational accuracy. This chain is Small ribosomal subunit protein uS4, found in Streptococcus pneumoniae serotype 2 (strain D39 / NCTC 7466).